Consider the following 179-residue polypeptide: Large ribosomal subunit protein uL6 (179 aa).

It belongs to the universal ribosomal protein uL6 family. As to quaternary structure, part of the 50S ribosomal subunit.

Its function is as follows. This protein binds to the 23S rRNA, and is important in its secondary structure. It is located near the subunit interface in the base of the L7/L12 stalk, and near the tRNA binding site of the peptidyltransferase center. This Chlorobium luteolum (strain DSM 273 / BCRC 81028 / 2530) (Pelodictyon luteolum) protein is Large ribosomal subunit protein uL6.